The following is a 446-amino-acid chain: Ribulose bisphosphate carboxylase large chain (446 aa).

Substrate-binding residues include Asn-89 and Thr-139. Lys-141 acts as the Proton acceptor in catalysis. Lys-143 is a binding site for substrate. The Mg(2+) site is built by Lys-167, Asp-169, and Glu-170. Lys-167 is modified (N6-carboxylysine). His-260 serves as the catalytic Proton acceptor. Arg-261, His-293, and Ser-345 together coordinate substrate.

This sequence belongs to the RuBisCO large chain family. Type I subfamily. In terms of assembly, heterohexadecamer of 8 large chains and 8 small chains; disulfide-linked. The disulfide link is formed within the large subunit homodimers. Mg(2+) is required as a cofactor. In terms of processing, the disulfide bond which can form in the large chain dimeric partners within the hexadecamer appears to be associated with oxidative stress and protein turnover.

The protein resides in the plastid. Its subcellular location is the chloroplast. It catalyses the reaction 2 (2R)-3-phosphoglycerate + 2 H(+) = D-ribulose 1,5-bisphosphate + CO2 + H2O. The catalysed reaction is D-ribulose 1,5-bisphosphate + O2 = 2-phosphoglycolate + (2R)-3-phosphoglycerate + 2 H(+). Functionally, ruBisCO catalyzes two reactions: the carboxylation of D-ribulose 1,5-bisphosphate, the primary event in carbon dioxide fixation, as well as the oxidative fragmentation of the pentose substrate in the photorespiration process. Both reactions occur simultaneously and in competition at the same active site. The polypeptide is Ribulose bisphosphate carboxylase large chain (Exacum affine (Persian violet)).